The following is an 848-amino-acid chain: DIS3-like exonuclease 2 (848 aa).

The tract at residues 153-173 (KGDRNSGKTDNNSPNKTEKRC) is disordered. Residues Asp-345 and Asp-354 each contribute to the Mg(2+) site.

The protein belongs to the RNR ribonuclease family. DIS3L2 subfamily. Mg(2+) serves as cofactor. Requires Mn(2+) as cofactor. Post-translationally, cleaved by caspase ced-3 in vitro.

It is found in the cytoplasm. The protein resides in the P-body. In terms of biological role, 3'-5'-exoribonuclease that specifically recognizes RNAs polyuridylated at their 3' end and mediates their degradation. Component of an exosome-independent RNA degradation pathway that mediates degradation of cytoplasmic mRNAs that have been deadenylated and subsequently uridylated at their 3'. In Caenorhabditis elegans, this protein is DIS3-like exonuclease 2.